Here is a 103-residue protein sequence, read N- to C-terminus: Histone H4 (103 aa).

A compositionally biased stretch (gly residues) spans 1–14 (MSGRGKGGKGLGKG). The disordered stretch occupies residues 1–20 (MSGRGKGGKGLGKGGAKRHR). The residue at position 2 (S2) is an N-acetylserine. Phosphoserine is present on S2. R4 carries the post-translational modification Asymmetric dimethylarginine; by PRMT1; alternate. Citrulline; alternate is present on R4. At R4 the chain carries Omega-N-methylarginine; by PRMT1; alternate. A Symmetric dimethylarginine; by PRMT5 and PRMT7; alternate modification is found at R4. Residues K6, K9, K13, and K17 each carry the N6-(2-hydroxyisobutyryl)lysine; alternate modification. The residue at position 6 (K6) is an N6-acetyl-N6-methyllysine; alternate. N6-acetyllysine occurs at positions 6, 9, 13, and 17. An N6-butyryllysine; alternate mark is found at K6, K9, K13, and K17. Residue K6 is modified to N6-glutaryllysine; alternate. N6-lactoyllysine; alternate is present on residues K6, K9, K13, and K17. K9 bears the N6-propionyllysine; alternate mark. The residue at position 13 (K13) is an N6-acetyl-N6-methyllysine; alternate. K13 carries the N6-glutaryllysine; alternate modification. N6-methyllysine; alternate is present on K13. At K17 the chain carries N6-propionyllysine; alternate. The DNA-binding element occupies 17-21 (KRHRK). K21 is modified (N6-methyllysine; alternate). K21 carries the N6,N6,N6-trimethyllysine; alternate modification. K21 is modified (N6,N6-dimethyllysine; alternate). K21 carries the post-translational modification N6-methylated lysine. An N6-(2-hydroxyisobutyryl)lysine; alternate mark is found at K32 and K45. Residue K32 is modified to N6-acetyllysine. 2 positions are modified to N6-butyryllysine; alternate: K32 and K45. N6-glutaryllysine; alternate is present on K32. K32 bears the N6-lactoyllysine; alternate mark. N6-propionyllysine; alternate is present on residues K32 and K45. The residue at position 32 (K32) is an N6-succinyllysine; alternate. K32 is covalently cross-linked (Glycyl lysine isopeptide (Lys-Gly) (interchain with G-Cter in UFM1); alternate). Position 48 is a phosphoserine; by PAK2 (S48). Phosphotyrosine is present on Y52. K60 bears the N6-acetyllysine mark. An N6-glutaryllysine; alternate mark is found at K60, K78, and K80. N6-(2-hydroxyisobutyryl)lysine is present on K60. 2 positions are modified to N6-(2-hydroxyisobutyryl)lysine; alternate: K78 and K80. N6-butyryllysine; alternate is present on residues K78 and K80. K78 bears the N6-lactoyllysine; alternate mark. An N6-propionyllysine; alternate mark is found at K78 and K80. K78 is modified (N6-succinyllysine). K80 carries the N6-acetyllysine modification. Y89 is subject to Phosphotyrosine. K92 is modified (N6-(2-hydroxyisobutyryl)lysine; alternate). K92 bears the N6-butyryllysine; alternate mark. K92 is subject to N6-glutaryllysine; alternate. Position 92 is an N6-lactoyllysine; alternate (K92). K92 carries the N6-propionyllysine; alternate modification. K92 is subject to N6-succinyllysine; alternate. K92 is subject to N6-acetyllysine; alternate. Residue K92 forms a Glycyl lysine isopeptide (Lys-Gly) (interchain with G-Cter in ubiquitin); alternate linkage.

It belongs to the histone H4 family. In terms of assembly, the nucleosome is a histone octamer containing two molecules each of H2A, H2B, H3 and H4 assembled in one H3-H4 heterotetramer and two H2A-H2B heterodimers. The octamer wraps approximately 147 bp of DNA. Acetylation at Lys-6 (H4K5ac), Lys-9 (H4K8ac), Lys-13 (H4K12ac) and Lys-17 (H4K16ac) occurs in coding regions of the genome but not in heterochromatin. In terms of processing, citrullination at Arg-4 (H4R3ci) by PADI4 impairs methylation. Post-translationally, monomethylation and asymmetric dimethylation at Arg-4 (H4R3me1 and H4R3me2a, respectively) by PRMT1 favors acetylation at Lys-9 (H4K8ac) and Lys-13 (H4K12ac). Demethylation is performed by JMJD6. Symmetric dimethylation on Arg-4 (H4R3me2s) by the PRDM1/PRMT5 complex may play a crucial role in the germ-cell lineage. Monomethylated, dimethylated or trimethylated at Lys-21 (H4K20me1, H4K20me2, H4K20me3). Monomethylation is performed by KMT5A/SET8. Trimethylation is performed by KMT5B and KMT5C and induces gene silencing. Monomethylated at Lys-13 (H4K12me1) by N6AMT1; H4K12me1 modification is present at the promoters of numerous genes encoding cell cycle regulators. In terms of processing, acetyl-methylated at Lys-6 and Lys-13 (H4K5acme and H4K12acme, respectively), acetyl-methylation is an epigenetic mark of active chromatin associated with increased transcriptional initiation. Acetyl-methylation is formed by acetylation by EP300/p300 of lysine residues that are already monomethylated on the same side chain. H4K5acme and H4K12acme marks specifically bind BRD2. Post-translationally, phosphorylated by pak2 at Ser-48 (H4S47ph). This phosphorylation increases the association of H3.3-H4 with the histone chaperone HIRA, thus promoting nucleosome assembly of H3.3-H4 and inhibiting nucleosome assembly of H3.1-H4. Ubiquitinated by the CUL4-DDB-RBX1 complex in response to ultraviolet irradiation. This may weaken the interaction between histones and DNA and facilitate DNA accessibility to repair proteins. Monoubiquitinated at Lys-92 of histone H4 (H4K91ub1) in response to DNA damage. The exact role of H4K91ub1 in DNA damage response is still unclear but it may function as a licensing signal for additional histone H4 post-translational modifications such as H4 Lys-21 methylation (H4K20me). In terms of processing, sumoylated, which is associated with transcriptional repression. Post-translationally, butyrylation of histones marks active promoters and competes with histone acetylation. Glutarylation at Lys-92 (H4K91glu) destabilizes nucleosomes by promoting dissociation of the H2A-H2B dimers from nucleosomes. In terms of processing, ufmylated; monofmylated by UFL1 at Lys-32 (H4K31Ufm1) in response to DNA damage. Post-translationally, lactylated in macrophages by EP300/P300 by using lactoyl-CoA directly derived from endogenous or exogenous lactate, leading to stimulates gene transcription. Delactylated by SIRT3 at Lys-17 (H4K16la).

The protein localises to the nucleus. The protein resides in the chromosome. Core component of nucleosome. Nucleosomes wrap and compact DNA into chromatin, limiting DNA accessibility to the cellular machineries which require DNA as a template. Histones thereby play a central role in transcription regulation, DNA repair, DNA replication and chromosomal stability. DNA accessibility is regulated via a complex set of post-translational modifications of histones, also called histone code, and nucleosome remodeling. The chain is Histone H4 from Xenopus laevis (African clawed frog).